Consider the following 159-residue polypeptide: Small ribosomal subunit protein uS9 (159 aa).

This sequence belongs to the universal ribosomal protein uS9 family.

The protein is Small ribosomal subunit protein uS9 of Bradyrhizobium diazoefficiens (strain JCM 10833 / BCRC 13528 / IAM 13628 / NBRC 14792 / USDA 110).